The following is a 479-amino-acid chain: V-type ATP synthase beta chain (479 aa).

The tract at residues 458–479 is disordered; the sequence is EGDSEREAPKMDSPHEEISEKS.

This sequence belongs to the ATPase alpha/beta chains family.

Produces ATP from ADP in the presence of a proton gradient across the membrane. The V-type beta chain is a regulatory subunit. In Nitrosococcus oceani (strain ATCC 19707 / BCRC 17464 / JCM 30415 / NCIMB 11848 / C-107), this protein is V-type ATP synthase beta chain.